The sequence spans 43 residues: Snaclec lebecetin subunit beta (43 aa).

The 43-residue stretch at 1–43 (ALNCASGWSGGYDQHCYKVFDIPPSWAADEKFCKQQTSGGHLV) folds into the C-type lectin domain. Cys4 and Cys16 are oxidised to a cystine.

Heterodimer of subunits alpha and beta; disulfide-linked. The cofactor is Ca(2+). Post-translationally, glycosylated. As to expression, expressed by the venom gland.

The protein localises to the secreted. In terms of biological role, binds to the platelet GPIb/IX/V receptor system and inhibits ristocetin-induced platelet aggregation in human platelet-rich plasma. Strongly inhibits platelet aggregation induced by ADP, calcium ionophore, thrombin and collagen. Does not inhibit U46619-induced platelet aggregation. The protein is Snaclec lebecetin subunit beta of Macrovipera lebetinus (Levantine viper).